A 165-amino-acid polypeptide reads, in one-letter code: PTS system glucose-specific EIIA component (165 aa).

The PTS EIIA type-1 domain maps to 33-137 (DPVFAGRMMG…STITPIVITN (105 aa)). Residues His-70 and His-85 each contribute to the Zn(2+) site. Catalysis depends on His-85, which acts as the Tele-phosphohistidine intermediate; for EIIA activity. Position 85 is a phosphohistidine; by HPr (His-85).

Heterodimer with glycerol kinase (glpk). Requires Zn(2+) as cofactor.

It localises to the cytoplasm. The phosphoenolpyruvate-dependent sugar phosphotransferase system (sugar PTS), a major carbohydrate active transport system, catalyzes the phosphorylation of incoming sugar substrates concomitantly with their translocation across the cell membrane. The enzyme II complex composed of PtsG and Crr is involved in glucose transport. This is PTS system glucose-specific EIIA component (crr) from Bacillus cereus (strain ATCC 14579 / DSM 31 / CCUG 7414 / JCM 2152 / NBRC 15305 / NCIMB 9373 / NCTC 2599 / NRRL B-3711).